The primary structure comprises 244 residues: tRNA (guanine-N(1)-)-methyltransferase (244 aa).

Residues Gly-112 and 132-137 (IGDYIL) each bind S-adenosyl-L-methionine.

Belongs to the RNA methyltransferase TrmD family. In terms of assembly, homodimer.

The protein resides in the cytoplasm. The enzyme catalyses guanosine(37) in tRNA + S-adenosyl-L-methionine = N(1)-methylguanosine(37) in tRNA + S-adenosyl-L-homocysteine + H(+). In terms of biological role, specifically methylates guanosine-37 in various tRNAs. The polypeptide is tRNA (guanine-N(1)-)-methyltransferase (Geobacillus kaustophilus (strain HTA426)).